We begin with the raw amino-acid sequence, 507 residues long: Maturase K (507 aa).

Belongs to the intron maturase 2 family. MatK subfamily.

It is found in the plastid. The protein localises to the chloroplast. Its function is as follows. Usually encoded in the trnK tRNA gene intron. Probably assists in splicing its own and other chloroplast group II introns. The chain is Maturase K from Lyonia ligustrina (Maleberry).